Reading from the N-terminus, the 191-residue chain is CASP-like protein 2U4 (191 aa).

The Cytoplasmic segment spans residues 1 to 25 (MGAYDGAEAPRAAPASTAANSRPSR). Residues 26-46 (LLLLHSLLLRLVAVVLSILVI) traverse the membrane as a helical segment. The Extracellular segment spans residues 47–68 (AVMVHAKQRVMIFKAEWDNSKA). A helical membrane pass occupies residues 69-89 (FVALVTISAICLGYSFLQFIL). The Cytoplasmic segment spans residues 90 to 114 (SAFHLCSKSWKSPTKCWAWMNFIAD). Residues 115–135 (QILTYAMLGAAAAAAELAYIA) form a helical membrane-spanning segment. Over 136–157 (KNGSSRAQWQPICSTFNTFCTR) the chain is Extracellular. Asn-137 carries an N-linked (GlcNAc...) asparagine glycan. A helical transmembrane segment spans residues 158 to 178 (AGASIILSFIAVLALANSSAI). Residues 179–191 (SAYHLFRRPSSSV) are Cytoplasmic-facing.

Belongs to the Casparian strip membrane proteins (CASP) family. As to quaternary structure, homodimer and heterodimers.

It is found in the cell membrane. The protein is CASP-like protein 2U4 of Selaginella moellendorffii (Spikemoss).